Consider the following 430-residue polypeptide: Glutamate-1-semialdehyde 2,1-aminomutase (430 aa).

Lysine 270 is subject to N6-(pyridoxal phosphate)lysine.

This sequence belongs to the class-III pyridoxal-phosphate-dependent aminotransferase family. HemL subfamily. As to quaternary structure, homodimer. The cofactor is pyridoxal 5'-phosphate.

It localises to the cytoplasm. The enzyme catalyses (S)-4-amino-5-oxopentanoate = 5-aminolevulinate. It functions in the pathway porphyrin-containing compound metabolism; protoporphyrin-IX biosynthesis; 5-aminolevulinate from L-glutamyl-tRNA(Glu): step 2/2. This chain is Glutamate-1-semialdehyde 2,1-aminomutase, found in Cupriavidus necator (strain ATCC 17699 / DSM 428 / KCTC 22496 / NCIMB 10442 / H16 / Stanier 337) (Ralstonia eutropha).